The primary structure comprises 510 residues: Chromosomal replication initiator protein DnaA (510 aa).

The interval 1 to 87 (MSVELWQQCV…IGSRRSSAPR (87 aa)) is domain I, interacts with DnaA modulators. Residues 87 to 173 (RAAPNAPVSA…QVEGALKHTS (87 aa)) are domain II. Positions 140-160 (DSFDAMAEPASAPASSGRAEQ) are disordered. Low complexity predominate over residues 144-157 (AMAEPASAPASSGR). The domain III, AAA+ region stretch occupies residues 174-390 (YLNRTFTFDT…GALKRVIAHS (217 aa)). ATP-binding residues include Gly-218, Gly-220, Lys-221, and Thr-222. A domain IV, binds dsDNA region spans residues 391–510 (HFMGRDITIE…YKNLLRTLTT (120 aa)).

It belongs to the DnaA family. Oligomerizes as a right-handed, spiral filament on DNA at oriC.

It localises to the cytoplasm. In terms of biological role, plays an essential role in the initiation and regulation of chromosomal replication. ATP-DnaA binds to the origin of replication (oriC) to initiate formation of the DNA replication initiation complex once per cell cycle. Binds the DnaA box (a 9 base pair repeat at the origin) and separates the double-stranded (ds)DNA. Forms a right-handed helical filament on oriC DNA; dsDNA binds to the exterior of the filament while single-stranded (ss)DNA is stabiized in the filament's interior. The ATP-DnaA-oriC complex binds and stabilizes one strand of the AT-rich DNA unwinding element (DUE), permitting loading of DNA polymerase. After initiation quickly degrades to an ADP-DnaA complex that is not apt for DNA replication. Binds acidic phospholipids. This Pseudomonas putida (strain GB-1) protein is Chromosomal replication initiator protein DnaA.